The primary structure comprises 152 residues: Complexin (152 aa).

Residues Met1 to Lys119 form a disordered region. A compositionally biased stretch (acidic residues) spans Asp23 to Ala39. Basic and acidic residues-rich tracts occupy residues Glu41 to Glu82 and Asp90 to Leu104. The interaction with the SNARE complex stretch occupies residues Glu59–Leu75. Cys149 carries the cysteine methyl ester modification. Cys149 carries the S-farnesyl cysteine lipid modification. Residues Ser150–Gln152 constitute a propeptide, removed in mature form.

This sequence belongs to the complexin/synaphin family. Binds to the SNARE core complex containing SNAP25, synaptobrevin and syntaxin-1.

It is found in the membrane. The protein resides in the cytoplasm. It localises to the cytosol. Positively regulates a late step in synaptic vesicle exocytosis. The polypeptide is Complexin (cpx) (Doryteuthis pealeii (Longfin inshore squid)).